The sequence spans 508 residues: tRNA(Ile2) 2-agmatinylcytidine synthetase TiaS (508 aa).

A DNA-binding region (OB) is located at residues 367-427 (ITGGHVLIEL…YQLNIEKINV (61 aa)).

The protein belongs to the TiaS family.

The protein localises to the cytoplasm. The catalysed reaction is cytidine(34) in tRNA(Ile2) + agmatine + ATP + H2O = 2-agmatinylcytidine(34) in tRNA(Ile2) + AMP + 2 phosphate + 2 H(+). In terms of biological role, ATP-dependent agmatine transferase that catalyzes the formation of 2-agmatinylcytidine (agm2C) at the wobble position (C34) of tRNA(Ile2), converting the codon specificity from AUG to AUA. This chain is tRNA(Ile2) 2-agmatinylcytidine synthetase TiaS, found in Methanococcus voltae (strain ATCC BAA-1334 / A3).